Reading from the N-terminus, the 258-residue chain is Snake venom serine proteinase 5 (258 aa).

A signal peptide spans 1 to 18 (MVLIRVLANLLILQLSYA). Positions 19-24 (QKSSEL) are excised as a propeptide. The region spanning 25–249 (VVGGDECNIN…YNDWIQSIIA (225 aa)) is the Peptidase S1 domain. Cystine bridges form between cysteine 31–cysteine 163, cysteine 50–cysteine 66, cysteine 98–cysteine 256, cysteine 142–cysteine 210, cysteine 174–cysteine 189, and cysteine 200–cysteine 225. Asparagine 44 is a glycosylation site (N-linked (GlcNAc...) asparagine). Active-site charge relay system residues include histidine 65 and aspartate 110. Serine 204 serves as the catalytic Charge relay system.

It belongs to the peptidase S1 family. Snake venom subfamily. In terms of assembly, monomer. As to expression, expressed by the venom gland.

It is found in the secreted. In terms of biological role, snake venom serine protease that may act in the hemostasis system of the prey. The sequence is that of Snake venom serine proteinase 5 from Crotalus adamanteus (Eastern diamondback rattlesnake).